We begin with the raw amino-acid sequence, 180 residues long: Large ribosomal subunit protein uL5 (180 aa).

It belongs to the universal ribosomal protein uL5 family. In terms of assembly, part of the 50S ribosomal subunit; part of the 5S rRNA/L5/L18/L25 subcomplex. Contacts the 5S rRNA and the P site tRNA. Forms a bridge to the 30S subunit in the 70S ribosome.

Functionally, this is one of the proteins that bind and probably mediate the attachment of the 5S RNA into the large ribosomal subunit, where it forms part of the central protuberance. In the 70S ribosome it contacts protein S13 of the 30S subunit (bridge B1b), connecting the 2 subunits; this bridge is implicated in subunit movement. Contacts the P site tRNA; the 5S rRNA and some of its associated proteins might help stabilize positioning of ribosome-bound tRNAs. The polypeptide is Large ribosomal subunit protein uL5 (Rippkaea orientalis (strain PCC 8801 / RF-1) (Cyanothece sp. (strain PCC 8801))).